A 233-amino-acid chain; its full sequence is Modulator of macroautophagy TMEM150B (233 aa).

Residues 1–7 are Cytoplasmic-facing; the sequence is MWGYLSL. A helical membrane pass occupies residues 8–28; it reads MPVFLAVWAISGVWIVFAIAV. The Extracellular portion of the chain corresponds to 29-51; that stretch reads TNRTVDLSKGFPYISICGSFPPQ. A glycan (N-linked (GlcNAc...) asparagine) is linked at asparagine 30. The helical transmembrane segment at 52–72 threads the bilayer; sequence SCIFSQVLNMGAALAAWICIV. Residues 73–84 lie on the Cytoplasmic side of the membrane; sequence RYHQLRDWGVRR. Residues 85–105 form a helical membrane-spanning segment; the sequence is WPNQLILWTGLLCALGTSVVG. The Extracellular portion of the chain corresponds to 106-116; the sequence is NFQEKNQRPTH. The helical transmembrane segment at 117-137 threads the bilayer; sequence LAGAFLAFILGNVYFWLQLLL. The Cytoplasmic portion of the chain corresponds to 138–155; the sequence is WRLKRLPQPGAAWIGPLR. A helical membrane pass occupies residues 156–176; the sequence is LGLCSVCTILIVAMIVLHACS. At 177 to 185 the chain is on the extracellular side; it reads LRSVSAACE. A helical membrane pass occupies residues 186–206; it reads WVVAMLLFALFGLLAVDFSAL. Over 207–233 the chain is Cytoplasmic; the sequence is ESCTLCVQPWPSLSPPPASPISLPVQL.

It belongs to the DRAM/TMEM150 family. In terms of tissue distribution, highly expressed in the colon and lung with comparatively high levels also detectable in the lymph nodes, placenta, duodenum, peripheral blood mononuclear cells and spleen.

The protein localises to the cell membrane. It is found in the endosome membrane. The protein resides in the cytoplasmic vesicle. Its subcellular location is the autophagosome membrane. Its function is as follows. Modulator of macroautophagy that causes accumulation of autophagosomes under basal conditions and enhances autophagic flux. Represses cell death and promotes long-term clonogenic survival of cells grown in the absence of glucose in a macroautophagy-independent manner. May have some role in extracellular matrix engulfment or growth factor receptor recycling, both of which can modulate cell survival. The sequence is that of Modulator of macroautophagy TMEM150B from Homo sapiens (Human).